Consider the following 140-residue polypeptide: Relaxin-3 (140 aa).

The first 26 residues, 1-26, serve as a signal peptide directing secretion; it reads MAKRPLLLLLLAVWVLAGELWLRTEA. Intrachain disulfides connect Cys-36-Cys-127, Cys-48-Cys-140, and Cys-126-Cys-131. A propeptide spans 56 to 116 (connecting peptide); the sequence is SDMLAHEALG…RTPGALRGSR (61 aa).

This sequence belongs to the insulin family. In terms of assembly, heterodimer of a B chain and an A chain linked by two disulfide bonds.

The protein resides in the secreted. Its function is as follows. May play a role in neuropeptide signaling processes. Ligand for LGR7, RXFP3 and RXFP4. This chain is Relaxin-3 (RLN3), found in Sus scrofa (Pig).